A 548-amino-acid polypeptide reads, in one-letter code: Esterase-5A (548 aa).

An N-terminal signal peptide occupies residues 1–21; that stretch reads MHLVRWLICLIQLWVQLGAAG. C87 and C106 are oxidised to a cystine. Residues N95 and N116 are each glycosylated (N-linked (GlcNAc...) asparagine). The active-site Acyl-ester intermediate is S210. C262 and C274 are joined by a disulfide. Residue N479 is glycosylated (N-linked (GlcNAc...) asparagine). C518 and C539 form a disulfide bridge.

The protein belongs to the type-B carboxylesterase/lipase family.

The protein localises to the secreted. It catalyses the reaction a carboxylic ester + H2O = an alcohol + a carboxylate + H(+). In Drosophila pseudoobscura pseudoobscura (Fruit fly), this protein is Esterase-5A (Est-5A).